Here is a 496-residue protein sequence, read N- to C-terminus: Cyclin-L1 (496 aa).

Cyclin-like regions lie at residues 68-170 and 183-267; these read ELIQ…RILK and KIIV…TTLR. The interval 301–496 is disordered; that stretch reads NPDGTPAILS…SHSGHGRHRR (196 aa). A compositionally biased stretch (basic and acidic residues) spans 322–347; sequence SPRDVKTEEKSPNFAKVKREMDDKQS. 4 stretches are compositionally biased toward basic residues: residues 358 to 392, 412 to 426, 434 to 446, and 456 to 468; these read ENKR…RRSR, RRHH…KLKH, RHAH…HSPS, and KKHR…HRER. Residues 363–406 are RS; that stretch reads RSVSRSRSRTKSRSRSHSPRRHYNNRRRSRSGTYSSRSRSRSRS. Basic and acidic residues predominate over residues 469–478; the sequence is RERSRSFERS. A compositionally biased stretch (basic residues) spans 479-496; the sequence is HKNKHHGSSHSGHGRHRR.

Belongs to the cyclin family. Cyclin L subfamily.

It localises to the nucleus speckle. The protein resides in the nucleus. It is found in the nucleoplasm. Involved in pre-mRNA splicing. This is Cyclin-L1 (ccnl1) from Xenopus laevis (African clawed frog).